A 151-amino-acid chain; its full sequence is uncharacterized protein (151 aa).

Residues cysteine 24, cysteine 27, cysteine 92, and cysteine 129 each contribute to the [4Fe-4S] cluster site.

Belongs to the complex I 20 kDa subunit family. [4Fe-4S] cluster serves as cofactor.

This is an uncharacterized protein from Methanocaldococcus jannaschii (strain ATCC 43067 / DSM 2661 / JAL-1 / JCM 10045 / NBRC 100440) (Methanococcus jannaschii).